The following is a 160-amino-acid chain: Ribonuclease P protein component 2 (160 aa).

The protein belongs to the eukaryotic/archaeal RNase P protein component 2 family. Consists of a catalytic RNA component and at least 4-5 protein subunits.

The protein localises to the cytoplasm. It catalyses the reaction Endonucleolytic cleavage of RNA, removing 5'-extranucleotides from tRNA precursor.. Functionally, part of ribonuclease P, a protein complex that generates mature tRNA molecules by cleaving their 5'-ends. The protein is Ribonuclease P protein component 2 of Methanosphaerula palustris (strain ATCC BAA-1556 / DSM 19958 / E1-9c).